The chain runs to 85 residues: Translation initiation factor IF-1 1 (85 aa).

Residues 1–72 (MSKEDLIEMQ…NKGRLTFRHI (72 aa)) enclose the S1-like domain.

This sequence belongs to the IF-1 family. As to quaternary structure, component of the 30S ribosomal translation pre-initiation complex which assembles on the 30S ribosome in the order IF-2 and IF-3, IF-1 and N-formylmethionyl-tRNA(fMet); mRNA recruitment can occur at any time during PIC assembly.

It is found in the cytoplasm. Its function is as follows. One of the essential components for the initiation of protein synthesis. Stabilizes the binding of IF-2 and IF-3 on the 30S subunit to which N-formylmethionyl-tRNA(fMet) subsequently binds. Helps modulate mRNA selection, yielding the 30S pre-initiation complex (PIC). Upon addition of the 50S ribosomal subunit IF-1, IF-2 and IF-3 are released leaving the mature 70S translation initiation complex. This chain is Translation initiation factor IF-1 1, found in Paracidovorax citrulli (strain AAC00-1) (Acidovorax citrulli).